A 271-amino-acid polypeptide reads, in one-letter code: Membrane protein insertase YidC 1 (271 aa).

An N-terminal signal peptide occupies residues 1–20 (MKKKLKTFSLILLTGSLLVA). A lipid anchor (N-palmitoyl cysteine) is attached at Cys21. Cys21 carries S-diacylglycerol cysteine lipidation. 4 helical membrane passes run 45–65 (IQWL…TLII), 124–144 (YASV…FQAL), 163–183 (PDPY…STWL), and 201–221 (VMPF…VLYW).

It belongs to the OXA1/ALB3/YidC family. Type 2 subfamily.

It localises to the cell membrane. Its function is as follows. Required for the insertion and/or proper folding and/or complex formation of integral membrane proteins into the membrane. Involved in integration of membrane proteins that insert both dependently and independently of the Sec translocase complex, as well as at least some lipoproteins. The chain is Membrane protein insertase YidC 1 from Streptococcus agalactiae serotype V (strain ATCC BAA-611 / 2603 V/R).